Consider the following 243-residue polypeptide: UPF0246 protein SAK_2020 (243 aa).

The protein belongs to the UPF0246 family.

This chain is UPF0246 protein SAK_2020, found in Streptococcus agalactiae serotype Ia (strain ATCC 27591 / A909 / CDC SS700).